The chain runs to 181 residues: Ribulose bisphosphate carboxylase small subunit, chloroplastic 1 (181 aa).

Residues methionine 1–arginine 57 constitute a chloroplast transit peptide.

It belongs to the RuBisCO small chain family. In terms of assembly, (Microbial infection) Binds to tobamovirus movement protein; this interaction seems required for viral systemic movement. As to quaternary structure, heterohexadecamer of 8 large and 8 small subunits.

The protein resides in the plastid. Its subcellular location is the chloroplast. It is found in the cell junction. The protein localises to the plasmodesma. RuBisCO catalyzes two reactions: the carboxylation of D-ribulose 1,5-bisphosphate, the primary event in carbon dioxide fixation, as well as the oxidative fragmentation of the pentose substrate. Both reactions occur simultaneously and in competition at the same active site. Although the small subunit is not catalytic it is essential for maximal activity. Involved in antiviral defenses. This Solanum lycopersicum (Tomato) protein is Ribulose bisphosphate carboxylase small subunit, chloroplastic 1.